We begin with the raw amino-acid sequence, 266 residues long: 3-methyl-2-oxobutanoate hydroxymethyltransferase (266 aa).

The Mg(2+) site is built by Asp45 and Asp84. 3-methyl-2-oxobutanoate-binding positions include 45 to 46 (DS), Asp84, and Lys112. Position 114 (Glu114) interacts with Mg(2+). Residue Glu181 is the Proton acceptor of the active site.

The protein belongs to the PanB family. In terms of assembly, homodecamer; pentamer of dimers. Mg(2+) serves as cofactor.

It is found in the cytoplasm. It carries out the reaction 3-methyl-2-oxobutanoate + (6R)-5,10-methylene-5,6,7,8-tetrahydrofolate + H2O = 2-dehydropantoate + (6S)-5,6,7,8-tetrahydrofolate. It participates in cofactor biosynthesis; (R)-pantothenate biosynthesis; (R)-pantoate from 3-methyl-2-oxobutanoate: step 1/2. Catalyzes the reversible reaction in which hydroxymethyl group from 5,10-methylenetetrahydrofolate is transferred onto alpha-ketoisovalerate to form ketopantoate. The polypeptide is 3-methyl-2-oxobutanoate hydroxymethyltransferase (Pseudomonas syringae pv. syringae (strain B728a)).